The primary structure comprises 399 residues: Acetate kinase (399 aa).

Asparagine 10 contributes to the Mg(2+) binding site. An ATP-binding site is contributed by lysine 17. Arginine 91 serves as a coordination point for substrate. The Proton donor/acceptor role is filled by aspartate 148. ATP-binding positions include 208–212 (HLGNG), 283–285 (DCR), and 331–335 (GIGEN). Residue glutamate 385 coordinates Mg(2+).

It belongs to the acetokinase family. Homodimer. The cofactor is Mg(2+). It depends on Mn(2+) as a cofactor.

It is found in the cytoplasm. It catalyses the reaction acetate + ATP = acetyl phosphate + ADP. Its pathway is metabolic intermediate biosynthesis; acetyl-CoA biosynthesis; acetyl-CoA from acetate: step 1/2. Catalyzes the formation of acetyl phosphate from acetate and ATP. Can also catalyze the reverse reaction. The sequence is that of Acetate kinase from Shewanella amazonensis (strain ATCC BAA-1098 / SB2B).